The primary structure comprises 434 residues: Double-stranded RNA-binding protein 2 (434 aa).

2 DRBM domains span residues 1–70 (MYKN…ALSN) and 87–155 (VYKN…SLKQ). Residues 402 to 434 (EKTASKETERAEFKDSSKGEPETARERLENLKI) form a disordered region.

As to quaternary structure, heterodimer with DRB1 or DRB5. Interacts with DCL1 and DCL5.

The protein resides in the cytoplasm. Functionally, binds double-stranded RNA. May be involved in RNA-mediated silencing. The chain is Double-stranded RNA-binding protein 2 (DRB2) from Arabidopsis thaliana (Mouse-ear cress).